Consider the following 732-residue polypeptide: Acylamino-acid-releasing enzyme (732 aa).

A Blocked amino end (Met); alternate modification is found at Met-1. Met-1 carries the N-acetylmethionine; alternate modification. A phosphoserine mark is found at Ser-185 and Ser-187. Catalysis depends on charge relay system residues Ser-587, Asp-675, and His-707.

Belongs to the peptidase S9C family. In terms of assembly, homotetramer.

It is found in the cytoplasm. The catalysed reaction is Cleavage of an N-acetyl or N-formyl amino acid from the N-terminus of a polypeptide.. With respect to regulation, homotetramerization is required for activity. Tetramerization results in the formation of a gated channel which is involved in substrate selection and substrate access to the catalytic sites. In terms of biological role, this enzyme catalyzes the hydrolysis of the N-terminal peptide bond of an N-acetylated peptide to generate an N-acetylated amino acid and a peptide with a free N-terminus. It preferentially cleaves off Ac-Ala, Ac-Met and Ac-Ser. Also, involved in the degradation of oxidized and glycated proteins. The polypeptide is Acylamino-acid-releasing enzyme (Apeh) (Rattus norvegicus (Rat)).